A 254-amino-acid polypeptide reads, in one-letter code: Phycobilisome rod-core linker polypeptide CpcG3 (254 aa).

In terms of domain architecture, PBS-linker spans Ser-11–Lys-191.

It belongs to the phycobilisome linker protein family. In terms of assembly, the phycobilisome is a hemidiscoidal structure that is composed of two distinct substructures: a core complex and a number of rods radiating from the core.

The protein resides in the cellular thylakoid membrane. Its function is as follows. Rod-core linker protein required for attachment of phycocyanin to allophycocyanin in cores of phycobilisomes. In terms of biological role, linker polypeptides determine the state of aggregation and the location of the disk-shaped phycobiliprotein units within the phycobilisome and modulate their spectroscopic properties in order to mediate a directed and optimal energy transfer. This chain is Phycobilisome rod-core linker polypeptide CpcG3 (cpcG3), found in Mastigocladus laminosus (Fischerella sp.).